Here is a 554-residue protein sequence, read N- to C-terminus: MRRPLSKCGMEPGGGDASLTLHGLQNRSHGKIKLRKRKSTLYFNTQEKSARRRGDLLGENIYLLLFTIALRILNCFLVQTSFVPDEYWQSLEVSHHMVFNYGYLTWEWTERLRSYTYPLIFASIYKILHLLGKDSVQLLIWIPRLAQALLSAVADVRLYSLMKQLENQEVARWVFFCQLCSWFTWYCCTRTLTNTMETVLTIIALFYYPLEGSKSMNSVKYSSLVALAFIIRPTAVILWTPLLFRHFCQEPRKLDLILHHFLPVGFVTLSLSLMIDRIFFGQWTLVQFNFLKFNVLQNWGTFYGSHPWHWYFSQGFPVILGTHLPFFIHGCYLAPKRYRILLVTVLWTLLVYSMLSHKEFRFIYPVLPFCMVFCGYSLTHLKTWKKPALSFLFLSNLFLALYTGLVHQRGTLDVMSHIQKVCYNNPNKSSASIFIMMPCHSTPYYSHVHCPLPMRFLQCPPDLTGKSHYLDEADVFYLNPLNWLHREFHDDASLPTHLITFSILEEEISAFLISSNYKRTAVFFHTHLPEGRIGSHIYVYERKLKGKFNMKMKF.

Residue Asn26 is glycosylated (N-linked (GlcNAc...) asparagine). The next 9 helical transmembrane spans lie at 63–83 (LLLFTIALRILNCFLVQTSFV), 136–156 (VQLLIWIPRLAQALLSAVADV), 192–212 (LTNTMETVLTIIALFYYPLEG), 224–244 (LVALAFIIRPTAVILWTPLLF), 255–275 (DLILHHFLPVGFVTLSLSLMI), 315–335 (GFPVILGTHLPFFIHGCYLAP), 340–360 (ILLVTVLWTLLVYSMLSHKEF), 362–382 (FIYPVLPFCMVFCGYSLTHLK), and 387–407 (PALSFLFLSNLFLALYTGLVH). Asn427 is a glycosylation site (N-linked (GlcNAc...) asparagine).

The protein belongs to the glycosyltransferase 22 family. PIGB subfamily.

It localises to the endoplasmic reticulum membrane. Its pathway is glycolipid biosynthesis; glycosylphosphatidylinositol-anchor biosynthesis. In terms of biological role, alpha-1,2-mannosyltransferase that catalyzes the transfer of the third mannose, via an alpha-1,2 bond, from a dolichol-phosphate-mannose (Dol-P-Man) to an alpha-D-Man-(1-&gt;6)-2-PEtn-alpha-D-Man-(1-&gt;4)-alpha-D-GlcN-(1-&gt;6)-(1-radyl,2-acyl-sn-glycero-3-phospho)-2-acyl-inositol intermediate to generate an alpha-D-Man-(1-&gt;2)-alpha-D-Man-(1-&gt;6)-2-PEtn-alpha-D-Man-(1-&gt;4)-alpha-D-GlcN-(1-&gt;6)-(1-radyl,2-acyl-sn-glycero-3-phospho)-2-acyl-inositol (also termed H6) and participates in the nineth step of the glycosylphosphatidylinositol-anchor biosynthesis. May also add the third mannose to an alpha-D-Man-(1-&gt;6)-alpha-D-Man-(1-&gt;4)-alpha-D-GlcN-(1-&gt;6)-(1-radyl,2-acyl-sn-glycero-3-phospho)-2-acyl-inositol (also termed H3) intermediate generating an alpha-D-Man-(1-&gt;2)-alpha-D-Man-(1-&gt;6)-alpha-D-Man-(1-&gt;4)-alpha-D-GlcN-(1-&gt;6)-(1-radyl,2-acyl-sn-glycero-3-phospho)-2-acyl-inositol (also termed H4). The polypeptide is GPI alpha-1,2-mannosyltransferase 3 (Homo sapiens (Human)).